Here is a 781-residue protein sequence, read N- to C-terminus: Coiled-coil and C2 domain-containing protein 1-like (781 aa).

Disordered stretches follow at residues 32-63 (MGRVSRPAAPARGAPPAARGRPAPAAPANVPG), 94-134 (ELNG…APNS), 187-296 (ESEI…AKES), 313-373 (CSAD…TEGN), and 403-447 (GELP…VEGK). The segment covering 37–59 (RPAAPARGAPPAARGRPAPAAPA) has biased composition (low complexity). Gly residues predominate over residues 98 to 107 (LVGGGGGGGA). A compositionally biased stretch (low complexity) spans 108 to 118 (APTVPTRAAPR). Pro residues-rich tracts occupy residues 119–129 (APGPSGPPPSA) and 204–222 (PLPPPAPTAQPAHHPPAPP). Residues 244–256 (APAPTAAAPPATK) show a composition bias toward low complexity. The span at 269 to 280 (ILHHRRDLHKQN) shows a compositional bias: basic residues. Over residues 285–296 (IADKDKESAKES) the composition is skewed to basic and acidic residues. The segment covering 324–341 (PPSPPPYRKPAPPQPQAP) has biased composition (pro residues). The span at 363 to 373 (KMAEKAKTEGN) shows a compositional bias: basic and acidic residues. The region spanning 605–741 (YEMRQIPSAD…EHSAEMEESL (137 aa)) is the C2 domain.

Belongs to the CC2D1 family.

The sequence is that of Coiled-coil and C2 domain-containing protein 1-like from Caenorhabditis elegans.